A 529-amino-acid chain; its full sequence is Listeriolysin O (529 aa).

Residues Met1–Ala24 form the signal peptide. 4 beta stranded membrane passes run Glu214–Ala227, Val234–Lys243, Ser312–Ala321, and Ser329–Ser341. Residues Glu483–Arg493 carry the Conserved undecapeptide motif. A Cholesterol binding motif is present at residues Thr515–Leu516.

It belongs to the cholesterol-dependent cytolysin family. As to quaternary structure, homooligomeric pore complex of 35 to 50 subunits; when inserted in the host membrane.

The protein localises to the secreted. It localises to the host membrane. It is found in the host cell membrane. With respect to regulation, activity of listeriolysin O is regulated on multiple levels. It should be high in the phagosome, thereby allowing escape of the bacteria from the phagosomal compartment. Then, once inside the host cytosol, the activity must be controlled to prevent lysis of the host plasma membrane and loss of the intracellular environment. A cholesterol-dependent toxin that causes cytolysis by forming pores in cholesterol containing host membranes. After binding to target membranes, the protein undergoes a major conformation change, leading to its insertion in the host membrane and formation of an oligomeric pore complex. Cholesterol is required for binding to host membranes, membrane insertion and pore formation; cholesterol binding is mediated by a Thr-Leu pair in the C-terminus. Acts as a major virulence factor required for the escape of bacteria from phagosomal vacuoles and entry into the host cytosol. Can be reversibly inactivated by oxidation. The protein is Listeriolysin O (hly) of Listeria monocytogenes serotype 4b (strain CLIP80459).